We begin with the raw amino-acid sequence, 423 residues long: Phosphoribosylamine--glycine ligase (423 aa).

An ATP-grasp domain is found at 107–314 (KAFMAKYNIP…LSDLVEAAID (208 aa)). Residue 133 to 194 (VNQKGAPIVI…EDFLQGEEAS (62 aa)) coordinates ATP. Positions 284 and 286 each coordinate Mg(2+).

It belongs to the GARS family. Requires Mg(2+) as cofactor. Mn(2+) serves as cofactor.

The catalysed reaction is 5-phospho-beta-D-ribosylamine + glycine + ATP = N(1)-(5-phospho-beta-D-ribosyl)glycinamide + ADP + phosphate + H(+). It participates in purine metabolism; IMP biosynthesis via de novo pathway; N(1)-(5-phospho-D-ribosyl)glycinamide from 5-phospho-alpha-D-ribose 1-diphosphate: step 2/2. This is Phosphoribosylamine--glycine ligase from Neisseria meningitidis serogroup A / serotype 4A (strain DSM 15465 / Z2491).